The chain runs to 340 residues: Phospho-N-acetylmuramoyl-pentapeptide-transferase (340 aa).

Transmembrane regions (helical) follow at residues 3–23 (MSLI…PHFI), 53–73 (GGTV…FHVF), 79–99 (AYGA…IGFL), 119–139 (MALQ…PSGT), 144–164 (IGGL…FWIV), 176–196 (IDGL…IIAF), 200–220 (ELAI…FFVF), 227–247 (VFMG…ISIA), 250–270 (VEWT…SVML), and 315–335 (VDAF…WMVL).

This sequence belongs to the glycosyltransferase 4 family. MraY subfamily. The cofactor is Mg(2+).

The protein resides in the cell membrane. It catalyses the reaction UDP-N-acetyl-alpha-D-muramoyl-L-alanyl-gamma-D-glutamyl-L-lysyl-D-alanyl-D-alanine + di-trans,octa-cis-undecaprenyl phosphate = Mur2Ac(oyl-L-Ala-gamma-D-Glu-L-Lys-D-Ala-D-Ala)-di-trans,octa-cis-undecaprenyl diphosphate + UMP. The protein operates within cell wall biogenesis; peptidoglycan biosynthesis. Functionally, catalyzes the initial step of the lipid cycle reactions in the biosynthesis of the cell wall peptidoglycan: transfers peptidoglycan precursor phospho-MurNAc-pentapeptide from UDP-MurNAc-pentapeptide onto the lipid carrier undecaprenyl phosphate, yielding undecaprenyl-pyrophosphoryl-MurNAc-pentapeptide, known as lipid I. The chain is Phospho-N-acetylmuramoyl-pentapeptide-transferase from Streptococcus thermophilus (strain CNRZ 1066).